The following is a 206-amino-acid chain: Probable GTP-binding protein EngB (206 aa).

The 173-residue stretch at 23–195 (DLLEIAFVGR…WARIEAIMAE (173 aa)) folds into the EngB-type G domain. Residues 31–38 (GRSNVGKS), 58–62 (GRTQL), 76–79 (DLPG), 143–146 (TKCD), and 174–176 (FSA) each bind GTP. Mg(2+)-binding residues include serine 38 and threonine 60.

This sequence belongs to the TRAFAC class TrmE-Era-EngA-EngB-Septin-like GTPase superfamily. EngB GTPase family. Requires Mg(2+) as cofactor.

Necessary for normal cell division and for the maintenance of normal septation. In Geobacter sulfurreducens (strain ATCC 51573 / DSM 12127 / PCA), this protein is Probable GTP-binding protein EngB.